We begin with the raw amino-acid sequence, 346 residues long: Uroporphyrinogen decarboxylase (346 aa).

Residues 23 to 27 (RQAGR), D72, Y149, T204, and H318 contribute to the substrate site.

The protein belongs to the uroporphyrinogen decarboxylase family. Homodimer.

The protein resides in the cytoplasm. It catalyses the reaction uroporphyrinogen III + 4 H(+) = coproporphyrinogen III + 4 CO2. It participates in porphyrin-containing compound metabolism; protoporphyrin-IX biosynthesis; coproporphyrinogen-III from 5-aminolevulinate: step 4/4. Its function is as follows. Catalyzes the decarboxylation of four acetate groups of uroporphyrinogen-III to yield coproporphyrinogen-III. This Synechococcus sp. (strain JA-2-3B'a(2-13)) (Cyanobacteria bacterium Yellowstone B-Prime) protein is Uroporphyrinogen decarboxylase.